Reading from the N-terminus, the 128-residue chain is Fluoride-specific ion channel FluC (128 aa).

The next 4 helical transmembrane spans lie at 5 to 25 (IVAI…LSIG), 35 to 55 (LGTL…VVAF), 67 to 87 (LFVI…SVEV), and 96 to 116 (FGWA…LTGL). Na(+) contacts are provided by G75 and T78.

The protein belongs to the fluoride channel Fluc/FEX (TC 1.A.43) family.

It localises to the cell inner membrane. The catalysed reaction is fluoride(in) = fluoride(out). Its activity is regulated as follows. Na(+) is not transported, but it plays an essential structural role and its presence is essential for fluoride channel function. Its function is as follows. Fluoride-specific ion channel. Important for reducing fluoride concentration in the cell, thus reducing its toxicity. The polypeptide is Fluoride-specific ion channel FluC (Burkholderia mallei (strain NCTC 10247)).